Consider the following 221-residue polypeptide: Leucine rich adaptor protein 1-like (221 aa).

Methionine 1 bears the N-acetylmethionine mark. The tract at residues 24-81 (LARSLRGEELAPREGAADPSGVGGSCSSSSSCSSFAPSVSSSSSSSPASGSPRRSHPS) is disordered. A compositionally biased stretch (basic and acidic residues) spans 28–39 (LRGEELAPREGA). A compositionally biased stretch (low complexity) spans 48 to 75 (SCSSSSSCSSFAPSVSSSSSSSPASGSP).

In Mus musculus (Mouse), this protein is Leucine rich adaptor protein 1-like (Lurap1l).